Here is a 1162-residue protein sequence, read N- to C-terminus: Sialidase (1162 aa).

3 BNR repeats span residues 23 to 34, 163 to 174, and 209 to 220; these read KYSVDDGETWET, FYSEDDGKTWKF, and YESSDMEKPWVE. Residues Asn342 and Asn394 are each glycosylated (N-linked (GlcNAc...) asparagine). The disordered stretch occupies residues 587-1123; that stretch reads HMDSSSDSSA…STPSTPAGSS (537 aa). Residues 589-615 are compositionally biased toward low complexity; sequence DSSSDSSAHSTPSTPADSSAHSTPSTP. The tract at residues 589 to 1120 is 44 X 12 AA tandem repeats, LTR domain; that stretch reads DSSSDSSAHS…SAHSTPSTPA (532 aa). Polar residues-rich tracts occupy residues 616–689 and 699–1123; these read VDSS…TPVD and PADS…AGSS. Asn1125 carries N-linked (GlcNAc...) asparagine glycosylation.

This sequence belongs to the glycosyl hydrolase 33 family.

The protein localises to the cell membrane. The catalysed reaction is Hydrolysis of alpha-(2-&gt;3)-, alpha-(2-&gt;6)-, alpha-(2-&gt;8)- glycosidic linkages of terminal sialic acid residues in oligosaccharides, glycoproteins, glycolipids, colominic acid and synthetic substrates.. In terms of biological role, developmentally regulated neuraminidase implicated in parasite invasion of cells. The sequence is that of Sialidase (TCNA) from Trypanosoma cruzi.